The primary structure comprises 72 residues: Translational regulator CsrA (72 aa).

Belongs to the CsrA/RsmA family. In terms of assembly, homodimer; the beta-strands of each monomer intercalate to form a hydrophobic core, while the alpha-helices form wings that extend away from the core.

It is found in the cytoplasm. A translational regulator that binds mRNA to regulate translation initiation and/or mRNA stability. Usually binds in the 5'-UTR at or near the Shine-Dalgarno sequence preventing ribosome-binding, thus repressing translation. Its main target seems to be the major flagellin gene, while its function is anatagonized by FliW. This chain is Translational regulator CsrA, found in Agathobacter rectalis (strain ATCC 33656 / DSM 3377 / JCM 17463 / KCTC 5835 / VPI 0990) (Eubacterium rectale).